Reading from the N-terminus, the 434-residue chain is F-box/LRR-repeat protein 21 (434 aa).

Residues 39-85 (RLDWGSLPHRVVLCVFQYLPLIDRARASSVCRRWNEVFHIPDLWRKF) enclose the F-box domain. 7 LRR repeats span residues 140–165 (LVNCSTQTLGLISTAKPSFMTMSKSH), 187–213 (DTPVDDPSLSILVANNSDTLRRLKMSS), 214–239 (CPHVSSDGILCVADHCQGLRELALNY), 242–265 (LSDELLLALSNETHVNLEHLRIDV), 322–347 (GRSVSKGILGRLSLNCPRLVELVVCA), 349–374 (GIQVIDNELICIAEHCKNLTALGLSE), and 375–400 (CEVSCTAFIEFVRLCGRKLTHLSIME).

As to quaternary structure, part of the SCF (SKP1-CUL1-F-box) E3 ubiquitin-protein ligase complex SCF(FBXL21) composed of CUL1, SKP1, RBX1 and FBXL21. Interacts with CRY2. Interacts with CRY1. Expressed in the adenohypophysis, hypothalamus (especially in the suprachiasmatic nucleus or nuclei, SCN) and pineal, all neuroendocrine structures associated with timing and homeostasis.

It localises to the cytoplasm. The protein localises to the cytosol. Its subcellular location is the nucleus. It participates in protein modification; protein ubiquitination. Functionally, substrate-recognition component of the SCF(FBXL21) E3 ubiquitin ligase complex involved in circadian rhythm function. Plays a key role in the maintenance of both the speed and the robustness of the circadian clock oscillation. The SCF(FBXL21) complex mainly acts in the cytosol and mediates ubiquitination of CRY proteins (CRY1 and CRY2), leading to CRY proteins stabilization. The SCF(FBXL21) complex counteracts the activity of the SCF(FBXL3) complex and protects CRY proteins from degradation. Involved in the hypothalamic suprachiasmatic nucleus (SCN) clock regulating temporal organization of the daily activities. The sequence is that of F-box/LRR-repeat protein 21 (Fbxl21) from Ovis aries (Sheep).